The following is a 310-amino-acid chain: Haloalkane dehalogenase (310 aa).

In terms of domain architecture, AB hydrolase-1 spans 30–140; that stretch reads PVVLFLHGNP…PMPTWQDFHH (111 aa). The active-site Nucleophile is Asp-103. Glu-127 functions as the Proton donor in the catalytic mechanism. His-280 acts as the Proton acceptor in catalysis.

It belongs to the haloalkane dehalogenase family. Type 2 subfamily. Monomer.

The catalysed reaction is 1-haloalkane + H2O = a halide anion + a primary alcohol + H(+). Its function is as follows. Catalyzes hydrolytic cleavage of carbon-halogen bonds in halogenated aliphatic compounds, leading to the formation of the corresponding primary alcohols, halide ions and protons. This is Haloalkane dehalogenase from Bradyrhizobium diazoefficiens (strain JCM 10833 / BCRC 13528 / IAM 13628 / NBRC 14792 / USDA 110).